A 132-amino-acid polypeptide reads, in one-letter code: Phosphoribosyl-AMP cyclohydrolase (132 aa).

Asp-76 is a binding site for Mg(2+). Cys-77 is a binding site for Zn(2+). 2 residues coordinate Mg(2+): Asp-78 and Asp-80. Residues Cys-93 and Cys-100 each contribute to the Zn(2+) site.

Belongs to the PRA-CH family. As to quaternary structure, homodimer. It depends on Mg(2+) as a cofactor. The cofactor is Zn(2+).

The protein resides in the cytoplasm. It carries out the reaction 1-(5-phospho-beta-D-ribosyl)-5'-AMP + H2O = 1-(5-phospho-beta-D-ribosyl)-5-[(5-phospho-beta-D-ribosylamino)methylideneamino]imidazole-4-carboxamide. The protein operates within amino-acid biosynthesis; L-histidine biosynthesis; L-histidine from 5-phospho-alpha-D-ribose 1-diphosphate: step 3/9. Functionally, catalyzes the hydrolysis of the adenine ring of phosphoribosyl-AMP. This is Phosphoribosyl-AMP cyclohydrolase from Methanobrevibacter smithii (strain ATCC 35061 / DSM 861 / OCM 144 / PS).